The primary structure comprises 418 residues: L-glutamine:2-deoxy-scyllo-inosose aminotransferase (418 aa).

Lysine 192 carries the post-translational modification N6-(pyridoxal phosphate)lysine.

This sequence belongs to the DegT/DnrJ/EryC1 family. L-glutamine:2-deoxy-scyllo-inosose/scyllo-inosose aminotransferase subfamily. It depends on pyridoxal 5'-phosphate as a cofactor.

The catalysed reaction is 2-deoxy-L-scyllo-inosose + L-glutamine = 2-deoxy-scyllo-inosamine + 2-oxoglutaramate. The enzyme catalyses 3-amino-2,3-dideoxy-scyllo-inosose + L-glutamine = 2-deoxystreptamine + 2-oxoglutaramate. It participates in metabolic intermediate biosynthesis; 2-deoxystreptamine biosynthesis; 2-deoxystreptamine from D-glucose 6-phosphate: step 2/4. It functions in the pathway metabolic intermediate biosynthesis; 2-deoxystreptamine biosynthesis; 2-deoxystreptamine from D-glucose 6-phosphate: step 4/4. The protein operates within antibiotic biosynthesis; butirosin biosynthesis. In terms of biological role, catalyzes the PLP-dependent transamination of 2-deoxy-scyllo-inosose (2-DOI) to form 2-deoxy-scyllo-inosamine (2-DOIA) using L-glutamine as the amino donor. Also catalyzes the transamination of 3-amino-2,3-dideoxy-scyllo-inosose (keto-2-DOIA) into 2-deoxystreptamine (2-DOS). This Niallia circulans (Bacillus circulans) protein is L-glutamine:2-deoxy-scyllo-inosose aminotransferase (btrR).